Consider the following 101-residue polypeptide: Large ribosomal subunit protein uL24 (101 aa).

The protein belongs to the universal ribosomal protein uL24 family. As to quaternary structure, part of the 50S ribosomal subunit.

In terms of biological role, one of two assembly initiator proteins, it binds directly to the 5'-end of the 23S rRNA, where it nucleates assembly of the 50S subunit. One of the proteins that surrounds the polypeptide exit tunnel on the outside of the subunit. In Ligilactobacillus salivarius (strain UCC118) (Lactobacillus salivarius), this protein is Large ribosomal subunit protein uL24.